Consider the following 59-residue polypeptide: UPF0181 protein CKO_01169 (59 aa).

Belongs to the UPF0181 family.

In Citrobacter koseri (strain ATCC BAA-895 / CDC 4225-83 / SGSC4696), this protein is UPF0181 protein CKO_01169.